The sequence spans 620 residues: Nuclear cap-binding protein subunit 3 (620 aa).

Lys-12 participates in a covalent cross-link: Glycyl lysine isopeptide (Lys-Gly) (interchain with G-Cter in SUMO2). The segment covering 15–28 (APAGPALGLPSPEA) has biased composition (low complexity). Positions 15-42 (APAGPALGLPSPEAESGVDRGEPEPMEV) are disordered. Ser-25 carries the phosphoserine modification. A Glycyl lysine isopeptide (Lys-Gly) (interchain with G-Cter in SUMO2) cross-link involves residue Lys-70. At Ser-73 the chain carries Phosphoserine. The interval 126 to 187 (ETIYICGVDE…MSSLPAQDKI (62 aa)) is RNA recognition motif (RRM) domain. The WLDD motif; essential for 7-methylguanosine-containing mRNA cap binding signature appears at 155–158 (WLDD). The span at 185-198 (DKIRSRDASEDKSA) shows a compositional bias: basic and acidic residues. 3 disordered regions span residues 185–233 (DKIR…LDTL), 332–419 (HSGL…PKKS), and 436–620 (IRNS…EAES). A Glycyl lysine isopeptide (Lys-Gly) (interchain with G-Cter in SUMO2) cross-link involves residue Lys-186. 2 positions are modified to phosphoserine: Ser-209 and Ser-210. 2 stretches are compositionally biased toward acidic residues: residues 209–230 (SSDD…DVEL) and 341–365 (EPIE…DMDA). The segment covering 366-388 (DDRVVVEYHEELPALKQPRERSA) has biased composition (basic and acidic residues). Thr-413 carries the post-translational modification Phosphothreonine. The residue at position 415 (Ser-415) is a Phosphoserine. Composition is skewed to basic and acidic residues over residues 459–474 (PPEK…DEKR) and 511–521 (VRREPSSDVHS). A Glycyl lysine isopeptide (Lys-Gly) (interchain with G-Cter in SUMO2) cross-link involves residue Lys-541. Composition is skewed to basic and acidic residues over residues 554 to 569 (KTKE…RAPG) and 585 to 598 (IKEK…KSRL). Positions 611–620 (ESSSGSEAES) are enriched in low complexity. Ser-620 carries the phosphoserine modification.

The protein belongs to the NCBP3 family. As to quaternary structure, component of an alternative cap-binding complex (CBC) composed of NCBP1/CBP80 and NCBP3. Interacts with SRRT, KPNA3, THOC5 and EIF4A3.

The protein localises to the nucleus. Its subcellular location is the cytoplasm. Its function is as follows. Associates with NCBP1/CBP80 to form an alternative cap-binding complex (CBC) which plays a key role in mRNA export. NCBP3 serves as adapter protein linking the capped RNAs (m7GpppG-capped RNA) to NCBP1/CBP80. Unlike the conventional CBC with NCBP2 which binds both small nuclear RNA (snRNA) and messenger (mRNA) and is involved in their export from the nucleus, the alternative CBC with NCBP3 does not bind snRNA and associates only with mRNA thereby playing a role in only mRNA export. The alternative CBC is particularly important in cellular stress situations such as virus infections and the NCBP3 activity is critical to inhibit virus growth. This is Nuclear cap-binding protein subunit 3 from Homo sapiens (Human).